The chain runs to 898 residues: Translation initiation factor IF-2 (898 aa).

Residues 51-302 form a disordered region; the sequence is KEHGDATGSE…RKGRINKPMS (252 aa). Composition is skewed to basic and acidic residues over residues 100–164 and 171–230; these read SSVE…KRET and RSDE…KETV. Positions 234 to 245 are enriched in polar residues; it reads QENTDYHVTTSR. Positions 263–273 are enriched in basic residues; sequence RRSTKANKRKM. Basic and acidic residues predominate over residues 274–286; that stretch reads SSRDDNQERDSRP. The span at 287–297 shows a compositional bias: basic residues; sequence RGGKAGRKGRI. Residues 397–566 enclose the tr-type G domain; sequence SRAPVVTIMG…LLQAEVLELK (170 aa). Residues 406–413 are G1; that stretch reads GHVDHGKT. 406–413 contacts GTP; the sequence is GHVDHGKT. The interval 431 to 435 is G2; it reads GITQH. Positions 452–455 are G3; that stretch reads DTPG. Residues 452 to 456 and 506 to 509 contribute to the GTP site; these read DTPGH and NKID. A G4 region spans residues 506–509; it reads NKID. The G5 stretch occupies residues 542–544; that stretch reads SAK.

It belongs to the TRAFAC class translation factor GTPase superfamily. Classic translation factor GTPase family. IF-2 subfamily.

It is found in the cytoplasm. Functionally, one of the essential components for the initiation of protein synthesis. Protects formylmethionyl-tRNA from spontaneous hydrolysis and promotes its binding to the 30S ribosomal subunits. Also involved in the hydrolysis of GTP during the formation of the 70S ribosomal complex. The polypeptide is Translation initiation factor IF-2 (Vibrio cholerae serotype O1 (strain ATCC 39541 / Classical Ogawa 395 / O395)).